A 381-amino-acid polypeptide reads, in one-letter code: Methanesulfonate monooxygenase (381 aa).

This sequence belongs to the SsuD family.

It carries out the reaction an alkanesulfonate + FMNH2 + O2 = an aldehyde + FMN + sulfite + H2O + 2 H(+). Functionally, catalyzes the desulfonation of aliphatic sulfonates. Shows highest activity with methanesulfonate. The protein is Methanesulfonate monooxygenase (msuD) of Pseudomonas aeruginosa (strain ATCC 15692 / DSM 22644 / CIP 104116 / JCM 14847 / LMG 12228 / 1C / PRS 101 / PAO1).